Consider the following 121-residue polypeptide: Mu-hexatoxin-Mg1a (121 aa).

Residues 1–20 (MMTLSPFLLLLIAAVVIGNA) form the signal peptide. Positions 21 to 80 (SEGEVKNEFEERLKDEFKDPSRSEVAEVILLRELEVLEETLFGKEMTSDTEENRNSREKR) are excised as a propeptide. Cystine bridges form between C81–C95, C88–C102, and C94–C116. The residue at position 120 (K120) is a Lysine amide.

The protein belongs to the neurotoxin 14 (magi-1) family. 09 (magi-1) subfamily. As to expression, expressed by the venom gland.

The protein localises to the secreted. Insecticidal neurotoxin. Shows competition for site 3 of insect voltage-gated sodium channels (Nav). Induces flaccid paralysis when injected into lepidopteran larvae. Is not toxic to mice when injected intracranially at 20 pmol/g. This Macrothele gigas (Japanese funnel web spider) protein is Mu-hexatoxin-Mg1a.